The following is a 40-amino-acid chain: MITDVQLAIFSNVLGVFLFLLVVAYHYINANTGKSIIKSK.

Residues 1-4 (MITD) are Lumenal-facing. Residues 5–25 (VQLAIFSNVLGVFLFLLVVAY) traverse the membrane as a helical segment. Over 26 to 40 (HYINANTGKSIIKSK) the chain is Cytoplasmic.

Belongs to the OST4 family. In terms of assembly, component of the oligosaccharyltransferase (OST) complex.

The protein resides in the endoplasmic reticulum membrane. Subunit of the oligosaccharyl transferase (OST) complex that catalyzes the initial transfer of a defined glycan (Glc(3)Man(9)GlcNAc(2) in eukaryotes) from the lipid carrier dolichol-pyrophosphate to an asparagine residue within an Asn-X-Ser/Thr consensus motif in nascent polypeptide chains, the first step in protein N-glycosylation. N-glycosylation occurs cotranslationally and the complex associates with the Sec61 complex at the channel-forming translocon complex that mediates protein translocation across the endoplasmic reticulum (ER). All subunits are required for a maximal enzyme activity. This is Dolichyl-diphosphooligosaccharide--protein glycosyltransferase subunit 4 from Drosophila grimshawi (Hawaiian fruit fly).